Here is a 125-residue protein sequence, read N- to C-terminus: U11-myrmicitoxin-Ta1a (125 aa).

An N-terminal signal peptide occupies residues 1–21 (MKTVIFILGFAFVAILIPTNG). A propeptide spanning residues 22 to 91 (ESMADADAMA…RAMAAAYAAA (70 aa)) is cleaved from the precursor. Cys-101 and Cys-124 are disulfide-bonded.

The protein belongs to the formicidae venom precursor-01 superfamily. In terms of tissue distribution, expressed by the venom gland.

The protein resides in the secreted. Its subcellular location is the target cell membrane. Its function is as follows. Neurotoxin that causes irreversible rapid flaccid paralysis in blowflies and honeybees upon intrathoracic injection. Causes a quick and irreversible cytolytic effect (at 10 uM) indicating it possibly acts as a pore-forming peptide. Shows only weak effect on aphids (A.pisum) at high doses 24 hours post intrathoracic injection. In vitro, is not cytotoxic on the dipteran S2 Drosophila embryonic cell line. The polypeptide is U11-myrmicitoxin-Ta1a (Tetramorium africanum (Fierce ant)).